Here is a 320-residue protein sequence, read N- to C-terminus: Cytochrome f (320 aa).

The signal sequence occupies residues 1 to 35 (MQTINTFSWINQRITRSISVLLLVYIITRTSISSA). 4 residues coordinate heme: Y36, C56, C59, and H60. A helical membrane pass occupies residues 286–306 (VQGLLFFLASVILAQIFLVLK).

The protein belongs to the cytochrome f family. The 4 large subunits of the cytochrome b6-f complex are cytochrome b6, subunit IV (17 kDa polypeptide, petD), cytochrome f and the Rieske protein, while the 4 small subunits are PetG, PetL, PetM and PetN. The complex functions as a dimer. Heme serves as cofactor.

It localises to the plastid thylakoid membrane. Functionally, component of the cytochrome b6-f complex, which mediates electron transfer between photosystem II (PSII) and photosystem I (PSI), cyclic electron flow around PSI, and state transitions. This Cuscuta exaltata (Tall dodder) protein is Cytochrome f.